The following is a 118-amino-acid chain: MAEQVTSAQATAKTVRIAARKVRLVIDLIRGKSVAEALAILQFTPRGASPVVAKVLNSAVANAENNFDLDRQDLVVSEAYVNEGPTLKRFRPRAKGSASPINKRTSHITVVVSEKEEG.

The protein belongs to the universal ribosomal protein uL22 family. As to quaternary structure, part of the 50S ribosomal subunit.

This protein binds specifically to 23S rRNA; its binding is stimulated by other ribosomal proteins, e.g. L4, L17, and L20. It is important during the early stages of 50S assembly. It makes multiple contacts with different domains of the 23S rRNA in the assembled 50S subunit and ribosome. Functionally, the globular domain of the protein is located near the polypeptide exit tunnel on the outside of the subunit, while an extended beta-hairpin is found that lines the wall of the exit tunnel in the center of the 70S ribosome. The chain is Large ribosomal subunit protein uL22 from Levilactobacillus brevis (strain ATCC 367 / BCRC 12310 / CIP 105137 / JCM 1170 / LMG 11437 / NCIMB 947 / NCTC 947) (Lactobacillus brevis).